Reading from the N-terminus, the 67-residue chain is Large ribosomal subunit protein bL35 (67 aa).

Positions 1 to 16 are enriched in basic residues; the sequence is MPKMKTKKSAAKRFRV. Residues 1–22 form a disordered region; that stretch reads MPKMKTKKSAAKRFRVRPGGTV.

Belongs to the bacterial ribosomal protein bL35 family.

The polypeptide is Large ribosomal subunit protein bL35 (Methylibium petroleiphilum (strain ATCC BAA-1232 / LMG 22953 / PM1)).